The chain runs to 344 residues: Dihydroorotase (344 aa).

Zn(2+) is bound by residues His13 and His15. Substrate is bound by residues His15–Arg17 and Asn41. Lys98, His135, and His173 together coordinate Zn(2+). At Lys98 the chain carries N6-carboxylysine. His135 is a binding site for substrate. Leu218 lines the substrate pocket. A Zn(2+)-binding site is contributed by Asp247. Asp247 is an active-site residue. Positions 251 and 263 each coordinate substrate.

This sequence belongs to the metallo-dependent hydrolases superfamily. DHOase family. Class II DHOase subfamily. As to quaternary structure, homodimer. Zn(2+) serves as cofactor.

It carries out the reaction (S)-dihydroorotate + H2O = N-carbamoyl-L-aspartate + H(+). It participates in pyrimidine metabolism; UMP biosynthesis via de novo pathway; (S)-dihydroorotate from bicarbonate: step 3/3. Catalyzes the reversible cyclization of carbamoyl aspartate to dihydroorotate. This is Dihydroorotase from Neisseria gonorrhoeae (strain ATCC 700825 / FA 1090).